A 1960-amino-acid polypeptide reads, in one-letter code: Zinc finger protein 638 (1960 aa).

The interval 1-137 (MSRPRFNPRG…SPKVQSRYTK (137 aa)) is disordered. Pro residues predominate over residues 19–31 (APNPPGMRPPGPF). Residues Arg-47, Arg-49, and Arg-54 each carry the asymmetric dimethylarginine modification. The span at 60–75 (SYQNMGPQRMNVQVTQ) shows a compositional bias: polar residues. The span at 76 to 89 (HRTDPRLTKEKLDF) shows a compositional bias: basic and acidic residues. Positions 117–137 (KQSSVTQVTEQSPKVQSRYTK) are enriched in polar residues. Phosphoserine occurs at positions 128 and 288. Lys-291 participates in a covalent cross-link: Glycyl lysine isopeptide (Lys-Gly) (interchain with G-Cter in SUMO2). A phosphoserine mark is found at Ser-298, Ser-367, Ser-381, and Ser-418. The disordered stretch occupies residues 352–373 (KSVISSADAHGGPTESKKDYQS). Disordered stretches follow at residues 463–673 (NPEI…QSLS), 749–804 (PGKK…STVK), and 827–899 (KASI…KESE). Over residues 468 to 483 (PSRRNESNRKENETPR) the composition is skewed to basic and acidic residues. The segment at 470–573 (RRNESNRKEN…ERTSRKSVRS (104 aa)) is involved in localization to nuclear speckles. The span at 484–556 (RRSHSPSPRH…SRNLLRRSPK (73 aa)) shows a compositional bias: basic residues. The residue at position 554 (Ser-554) is a Phosphoserine. Composition is skewed to basic and acidic residues over residues 565–583 (RTSRKSVRSDRKKALEDGG) and 591–602 (EVTKQKHTETVD). Ser-606 and Ser-615 each carry phosphoserine. A compositionally biased stretch (low complexity) spans 618 to 628 (KPSAKSLSSVK). Ser-637 bears the Phosphoserine mark. Residues 676-751 (SILLVSELPE…KSVKVCVPGK (76 aa)) enclose the RRM 1 domain. Over residues 755–782 (QNKEMKKKPSDIKKSSASALKKETDASK) the composition is skewed to basic and acidic residues. Lys-775 participates in a covalent cross-link: Glycyl lysine isopeptide (Lys-Gly) (interchain with G-Cter in SUMO2). Low complexity predominate over residues 783-802 (TMETVSSSSSAKSGQIKSST). 3 stretches are compositionally biased toward basic and acidic residues: residues 838 to 854 (KSLEAKKSGNIKNKDSN), 867 to 879 (ASSEDKATGKSAE), and 888 to 899 (ATEKEPVNKESE). The RRM 2 domain occupies 902–976 (SVVFISNLPN…NQLSISMAPE (75 aa)). Residues 1082–1092 (SEVQRKNDLEL) show a composition bias toward basic and acidic residues. Disordered regions lie at residues 1082-1151 (SEVQ…EEPK), 1396-1420 (TVVSSPKAKSTPSKTESHSTFPKPV), 1442-1462 (TRSGLAESNSKSKPTQIGVNR), 1484-1527 (TKQS…KSKE), and 1550-1583 (PSQAKQNPLKGKRKEALKISPSPELNLKKKKGKT). The residue at position 1099 (Ser-1099) is a Phosphoserine. Residues 1140–1151 (VHQEELGKEEPK) show a composition bias toward basic and acidic residues. The segment covering 1399-1409 (SSPKAKSTPSK) has biased composition (low complexity). Phosphoserine is present on Ser-1400. Positions 1442 to 1459 (TRSGLAESNSKSKPTQIG) are enriched in polar residues. Basic and acidic residues-rich tracts occupy residues 1484–1503 (TKQSQETETKPPIMKRDDSN) and 1518–1527 (TTDRSSKSKE). 2 positions are modified to phosphoserine: Ser-1635 and Ser-1661. 2 disordered regions span residues 1763-1898 (EVGD…SDVP) and 1930-1960 (KSTRHKQNTEKFMAKQRKEKEQNETEERSSR). Residues 1772-1790 (NDSKVELARGKIEHHTDKK) show a composition bias toward basic and acidic residues. Lys-1804 participates in a covalent cross-link: Glycyl lysine isopeptide (Lys-Gly) (interchain with G-Cter in SUMO2). Residues 1806–1818 (DSFSQVGPGSETV) show a composition bias toward polar residues. Positions 1819–1831 (TQKDLKTMPERHL) are enriched in basic and acidic residues. At Ser-1864 the chain carries Phosphoserine. A compositionally biased stretch (basic and acidic residues) spans 1870 to 1885 (AELKDSEPDEKRRKTQ). The Matrin-type zinc-finger motif lies at 1876-1906 (EPDEKRRKTQDSSVGKSMTSDVPGDLDFLVP). Polar residues predominate over residues 1886-1895 (DSSVGKSMTS). Over residues 1936–1960 (QNTEKFMAKQRKEKEQNETEERSSR) the composition is skewed to basic and acidic residues.

Interacts with FHL2. Interacts with CEBPA, CEBPD and CEBPG. Interacts with MPHOSPH8 and TASOR components of the HUSH complex; leading to recruitment of the HUSH complex. Interacts with SETDB1. Interacts with HDAC1. Interacts with HDAC4.

The protein localises to the nucleus speckle. Functionally, transcription factor that binds to cytidine clusters in double-stranded DNA. Plays a key role in the silencing of unintegrated retroviral DNA: some part of the retroviral DNA formed immediately after infection remains unintegrated in the host genome and is transcriptionally repressed. Mediates transcriptional repression of unintegrated viral DNA by specifically binding to the cytidine clusters of retroviral DNA and mediating the recruitment of chromatin silencers, such as the HUSH complex, SETDB1 and the histone deacetylases HDAC1 and HDAC4. Acts as an early regulator of adipogenesis by acting as a transcription cofactor of CEBPs (CEBPA, CEBPD and/or CEBPG), controlling the expression of PPARG and probably of other proadipogenic genes, such as SREBF1. May also regulate alternative splicing of target genes during adipogenesis. In Mus musculus (Mouse), this protein is Zinc finger protein 638.